Reading from the N-terminus, the 261-residue chain is Phosphonates import ATP-binding protein PhnC (261 aa).

One can recognise an ABC transporter domain in the interval 8-253 (LRVENLSKTY…WFRRIYGEGA (246 aa)). 41-48 (GLSGSGKS) is a binding site for ATP.

It belongs to the ABC transporter superfamily. Phosphonates importer (TC 3.A.1.9.1) family. In terms of assembly, the complex is composed of two ATP-binding proteins (PhnC), two transmembrane proteins (PhnE) and a solute-binding protein (PhnD).

The protein resides in the cell inner membrane. The catalysed reaction is phosphonate(out) + ATP + H2O = phosphonate(in) + ADP + phosphate + H(+). Functionally, part of the ABC transporter complex PhnCDE involved in phosphonates import. Responsible for energy coupling to the transport system. The sequence is that of Phosphonates import ATP-binding protein PhnC from Bdellovibrio bacteriovorus (strain ATCC 15356 / DSM 50701 / NCIMB 9529 / HD100).